Here is a 556-residue protein sequence, read N- to C-terminus: Zinc finger protein 18 (556 aa).

Positions 41 to 123 constitute an SCAN box domain; the sequence is RQLFRQFRYQ…TLVESLKGEP (83 aa). The tract at residues 169–195 is disordered; sequence QDLPLQNSSSATGELLSHGVKEESDME. The 74-residue stretch at 218–291 folds into the KRAB domain; it reads ELGTAVLPPL…HLHGAEKMAR (74 aa). 5 C2H2-type zinc fingers span residues 415–437, 443–465, 471–493, 499–521, and 527–549; these read PTCR…QRTH, FHCH…QRTH, CKCD…EKIH, YKCP…QRVH, and YKCT…QRSH.

The protein belongs to the krueppel C2H2-type zinc-finger protein family.

The protein resides in the nucleus. Functionally, may be involved in transcriptional regulation. The protein is Zinc finger protein 18 (Znf18) of Mus musculus (Mouse).